The primary structure comprises 886 residues: Microsomal triglyceride transfer protein (886 aa).

A signal peptide spans 1-24 (MLRLAGLLLCVTSFLSTSSLGANA). The Vitellogenin domain maps to 28–662 (LDNDRLYRYS…QSNNALLHGL (635 aa)). Disulfide bonds link Cys-174–Cys-194 and Cys-440–Cys-445.

As to quaternary structure, heterodimer; heterodimerizes with the protein disulfide isomerase. Interacts with apolipoprotein B.

It localises to the endoplasmic reticulum. Its function is as follows. Catalyzes the transport of triglyceride, cholesteryl ester, and phospholipid between phospholipid surfaces. Required for the secretion of plasma lipoproteins that contain apolipoprotein B. The sequence is that of Microsomal triglyceride transfer protein from Megalobrama amblycephala (Chinese blunt snout bream).